A 132-amino-acid polypeptide reads, in one-letter code: Agouti-signaling protein (132 aa).

The signal sequence occupies residues 1 to 22 (MDVTRLLLATLLVFLCFFTVYS). N39 carries N-linked (GlcNAc...) asparagine glycosylation. The segment at 62–88 (ISRKEAEKKRSSKKEASMKKVAQPRTP) is disordered. The segment covering 63–79 (SRKEAEKKRSSKKEASM) has biased composition (basic and acidic residues). Cystine bridges form between C93–C108, C100–C114, C107–C125, C111–C132, and C116–C123. In terms of domain architecture, Agouti spans 93-132 (CVATRYSCKPPAPACCDPCASCQCRFFRSACSCRVLRLNC).

The protein localises to the secreted. Its function is as follows. Involved in the regulation of melanogenesis. The binding of ASP to MC1R precludes alpha-MSH initiated signaling and thus blocks production of cAMP, leading to a down-regulation of eumelanogenesis (brown/black pigment) and thus increasing synthesis of pheomelanin (yellow/red pigment). The protein is Agouti-signaling protein (ASIP) of Semnopithecus entellus (Northern plains gray langur).